The sequence spans 83 residues: Small ribosomal subunit protein bS16 (83 aa).

It belongs to the bacterial ribosomal protein bS16 family.

This chain is Small ribosomal subunit protein bS16, found in Ectopseudomonas mendocina (strain ymp) (Pseudomonas mendocina).